Consider the following 778-residue polypeptide: Protein SPT2 homolog (778 aa).

Disordered stretches follow at residues 1 to 21, 50 to 625, and 639 to 685; these read MDFH…GIAK, KKDE…AKPK, and VPKS…DDDD. Positions 1 to 665 are important for interaction with DNA; that stretch reads MDFHSVLKMA…PGHRPAMRPP (665 aa). Residues 44-83 are a coiled coil; the sequence is VQAFLRKKDEESRRKETVEKRKKEDLLAKRKELKHDRKAR. Over residues 50 to 78 the composition is skewed to basic and acidic residues; the sequence is KKDEESRRKETVEKRKKEDLLAKRKELKH. The span at 114–135 shows a compositional bias: acidic residues; that stretch reads EEDQNDNMAAEGEEYMTEEELY. Residues 153–167 are compositionally biased toward pro residues; that stretch reads QKVPKPAPGKKPPTP. Positions 190–227 are enriched in basic and acidic residues; the sequence is RPVKKEERLRTAEELKELEFLERKAQKADRKDPKRNEQ. A coiled-coil region spans residues 193-221; it reads KKEERLRTAEELKELEFLERKAQKADRKD. Residues 242-269 are compositionally biased toward polar residues; sequence LKGTHSGNSKSSSTEQNGTIRKSSSDTG. Residues 270 to 286 show a composition bias toward basic and acidic residues; sequence SRTEKSGSVFHTKESKK. Low complexity predominate over residues 312–335; sequence SSQPSAASNSAFGRPSGSARPSGS. 2 stretches are compositionally biased toward gly residues: residues 336–357 and 365–384; these read SGPG…GGSA and GGSG…GKPI. The segment covering 385 to 394 has biased composition (low complexity); it reads GGLHSSHGSG. Positions 395–417 are enriched in gly residues; sequence KPTGGTGSGSGKPTGASGSGSGK. 2 stretches are compositionally biased toward low complexity: residues 418-493 and 506-559; these read PTGS…SGSA and GSGS…PSSS. A compositionally biased stretch (polar residues) spans 588-604; the sequence is VRPNSTSVPGSARSSLG. Residues 662 to 671 show a composition bias toward pro residues; it reads MRPPGPPLPP. Residues 666–778 form an important for interaction with histones region; sequence GPPLPPITSS…QLKAAKKMSR (113 aa). The stretch at 735–778 forms a coiled coil; that stretch reads REQQKEEARSLRLGIQEDLEELQREEEELKRKAKQLKAAKKMSR.

The protein belongs to the SPT2 family. Interacts with histones. Interacts with a heterotetrameric complex formed by histone H3 and H4, especially when the histone tetramer is not bound to DNA.

The protein resides in the nucleus. It localises to the nucleolus. Histone chaperone that stabilizes pre-existing histone tetramers and regulates replication-independent histone exchange on chromatin. Required for normal chromatin refolding in the coding region of transcribed genes, and for the suppression of spurious transcription. Binds DNA and histones and promotes nucleosome assembly (in vitro). Facilitates formation of tetrameric histone complexes containing histone H3 and H4. Modulates RNA polymerase 1-mediated transcription. Binds DNA, with a preference for branched DNA species, such as Y-form DNA and Holliday junction DNA. The chain is Protein SPT2 homolog (spty2d1) from Xenopus tropicalis (Western clawed frog).